The sequence spans 274 residues: Triosephosphate isomerase (274 aa).

31 to 33 (NWK) is a binding site for substrate. Histidine 118 acts as the Electrophile in catalysis. The active-site Proton acceptor is the glutamate 188. Substrate is bound by residues glycine 194, serine 234, and 255–256 (GG).

It belongs to the triosephosphate isomerase family. In terms of assembly, homodimer.

The protein localises to the cytoplasm. It carries out the reaction D-glyceraldehyde 3-phosphate = dihydroxyacetone phosphate. Its pathway is carbohydrate biosynthesis; gluconeogenesis. It participates in carbohydrate degradation; glycolysis; D-glyceraldehyde 3-phosphate from glycerone phosphate: step 1/1. Involved in the gluconeogenesis. Catalyzes stereospecifically the conversion of dihydroxyacetone phosphate (DHAP) to D-glyceraldehyde-3-phosphate (G3P). The polypeptide is Triosephosphate isomerase (Chlamydia trachomatis serovar D (strain ATCC VR-885 / DSM 19411 / UW-3/Cx)).